The following is a 197-amino-acid chain: Putative ankyrin repeat protein R875 (197 aa).

ANK repeat units lie at residues 78–106, 107–136, 138–166, and 168–196; these read LNKCLIGYCISGRLDIVKYLVILGADIRE, NDDCVVRTACHNGHIEVVKYLVNQGADIRA, DDDAIRLASKNGHLYVVKYLVSQGVNFRK, and NDYEINWASQNGHGSVVDFLVSKGAVLHE.

This is Putative ankyrin repeat protein R875 from Acanthamoeba polyphaga mimivirus (APMV).